The chain runs to 141 residues: 3-hydroxyacyl-[acyl-carrier-protein] dehydratase FabZ (141 aa).

The active site involves His48.

This sequence belongs to the thioester dehydratase family. FabZ subfamily.

Its subcellular location is the cytoplasm. It catalyses the reaction a (3R)-hydroxyacyl-[ACP] = a (2E)-enoyl-[ACP] + H2O. Its function is as follows. Involved in unsaturated fatty acids biosynthesis. Catalyzes the dehydration of short chain beta-hydroxyacyl-ACPs and long chain saturated and unsaturated beta-hydroxyacyl-ACPs. The polypeptide is 3-hydroxyacyl-[acyl-carrier-protein] dehydratase FabZ (Bacillus subtilis (strain 168)).